We begin with the raw amino-acid sequence, 497 residues long: Probable cytosol aminopeptidase (497 aa).

2 residues coordinate Mn(2+): Lys-263 and Asp-268. The active site involves Lys-275. Positions 286, 345, and 347 each coordinate Mn(2+). Arg-349 is an active-site residue.

The protein belongs to the peptidase M17 family. Mn(2+) serves as cofactor.

Its subcellular location is the cytoplasm. The enzyme catalyses Release of an N-terminal amino acid, Xaa-|-Yaa-, in which Xaa is preferably Leu, but may be other amino acids including Pro although not Arg or Lys, and Yaa may be Pro. Amino acid amides and methyl esters are also readily hydrolyzed, but rates on arylamides are exceedingly low.. It catalyses the reaction Release of an N-terminal amino acid, preferentially leucine, but not glutamic or aspartic acids.. Presumably involved in the processing and regular turnover of intracellular proteins. Catalyzes the removal of unsubstituted N-terminal amino acids from various peptides. This chain is Probable cytosol aminopeptidase, found in Allorhizobium ampelinum (strain ATCC BAA-846 / DSM 112012 / S4) (Agrobacterium vitis (strain S4)).